Here is a 544-residue protein sequence, read N- to C-terminus: MPKQLYFNEEARRALKRGVDLVADAVKTTLGPRGRNVAIDKKFGSPTVTHDGVTVAKEIELKDPFENMGAQLLKEAATKTNDVAGDGTTTATVLAQAIVTEGLKVVAAGANAMLLKRGLDRGAEALVAAIKASAVPVRDRADIAHVATNSAADSEIGELIAEVMEKVGKDGVITVEESKGVTFEKEYTEGMQFDRGYISGYMVTNVERQEAELDEPYILITDKKISSIQEILPVLEKVLQVTKNFVIIAEDVDGEALATLVVNKLRGTINALAVKAPGFGDRRKAMLQDIAILTGGTVISEEIGRKLDSATIEDLGRARKVIATKDDTTIIEGRGDEAAIRARIEQIRAQIATTTSDFDREKLQERLAKLAGGVAVIKVGAATEPELKEKKHRVEDALSATRAAVEEGIVPGGGVALINAIPALDNVQVAHEDEKVGLQILRRALEEPLRILARNAGEDGSVIIANVRRLQEEKGDKTIGYNVLTGQYGSMIEQGIIDPVKVTRSAVQNAVSIAGMILTTEALITDIPEDKPAATPGAGGGMDF.

ATP contacts are provided by residues 29 to 32 (TLGP), 86 to 90 (DGTTT), Gly-413, 482 to 484 (NVL), and Asp-498.

This sequence belongs to the chaperonin (HSP60) family. Forms a cylinder of 14 subunits composed of two heptameric rings stacked back-to-back. Interacts with the co-chaperonin GroES.

It localises to the cytoplasm. The catalysed reaction is ATP + H2O + a folded polypeptide = ADP + phosphate + an unfolded polypeptide.. Together with its co-chaperonin GroES, plays an essential role in assisting protein folding. The GroEL-GroES system forms a nano-cage that allows encapsulation of the non-native substrate proteins and provides a physical environment optimized to promote and accelerate protein folding. The protein is Chaperonin GroEL 1 of Chloroflexus aurantiacus (strain ATCC 29366 / DSM 635 / J-10-fl).